Here is a 360-residue protein sequence, read N- to C-terminus: Casein kinase II subunit alpha (360 aa).

The Protein kinase domain occupies 38 to 323 (YQLVRKLGRG…AQEAMGHEYF (286 aa)). ATP contacts are provided by residues 44 to 52 (LGRGKYSEV) and Lys-67. Asp-155 acts as the Proton acceptor in catalysis. A disordered region spans residues 334-360 (NGTEQADGQGASNSASSQSSDAKIDGA). Low complexity predominate over residues 338–354 (QADGQGASNSASSQSSD).

Belongs to the protein kinase superfamily. Ser/Thr protein kinase family. CK2 subfamily. As to quaternary structure, tetramer of two alpha and two beta chains. Expressed in a subset of the adult male sensory neurons: CEM head neurons, ray RnB neurons, and hook HOB tail neurons.

It localises to the cell projection. The protein localises to the axon. It is found in the cilium. The protein resides in the dendrite. Its subcellular location is the perikaryon. It catalyses the reaction L-seryl-[protein] + ATP = O-phospho-L-seryl-[protein] + ADP + H(+). The enzyme catalyses L-threonyl-[protein] + ATP = O-phospho-L-threonyl-[protein] + ADP + H(+). Casein kinases are operationally defined by their preferential utilization of acidic proteins such as caseins as substrates. The alpha chain contains the catalytic site. May participate in Wnt signaling. Modulates two aspects of male mating behavior; response to hermaphrodite contact and vulval location, acting in the same pathway as lov-1 and pkd-2. In Caenorhabditis elegans, this protein is Casein kinase II subunit alpha (kin-3).